A 299-amino-acid chain; its full sequence is Coenzyme PQQ synthesis protein B (299 aa).

Belongs to the PqqB family.

It participates in cofactor biosynthesis; pyrroloquinoline quinone biosynthesis. Functionally, may be involved in the transport of PQQ or its precursor to the periplasm. The chain is Coenzyme PQQ synthesis protein B from Xanthomonas oryzae pv. oryzae (strain MAFF 311018).